The sequence spans 430 residues: Anaerobic glycerol-3-phosphate dehydrogenase subunit B (430 aa).

Belongs to the anaerobic G-3-P dehydrogenase subunit B family. Composed of a catalytic GlpA/B dimer and of membrane bound GlpC. Requires FMN as cofactor.

The catalysed reaction is a quinone + sn-glycerol 3-phosphate = dihydroxyacetone phosphate + a quinol. The protein operates within polyol metabolism; glycerol degradation via glycerol kinase pathway; glycerone phosphate from sn-glycerol 3-phosphate (anaerobic route): step 1/1. In terms of biological role, conversion of glycerol 3-phosphate to dihydroxyacetone. Uses fumarate or nitrate as electron acceptor. This is Anaerobic glycerol-3-phosphate dehydrogenase subunit B from Actinobacillus succinogenes (strain ATCC 55618 / DSM 22257 / CCUG 43843 / 130Z).